The following is a 360-amino-acid chain: DAZ-associated protein 1 (360 aa).

2 consecutive RRM domains span residues 10-97 (GKLF…RSRP) and 114-191 (NKIF…RAEP). 2 disordered regions span residues 73–116 (HTLD…SNKI) and 184–345 (VEVK…DFPF). 2 stretches are compositionally biased toward basic and acidic residues: residues 91 to 112 (QPER…ENSR) and 184 to 195 (VEVKRAEPRDSK). The segment covering 203 to 231 (GSNQWGSRAMQSTANGWTGQPPQTWQGYS) has biased composition (polar residues). The span at 242–253 (TIGGYGQPAGRG) shows a compositional bias: gly residues. Positions 271-301 (GPFPPPQGFPPGYATPPPFGYGYGPPPPPPD) are enriched in pro residues. Over residues 328–345 (QSAQDLSKPPSGQQDFPF) the composition is skewed to polar residues.

Component of a mRNP complex, at least composed of DAZAP1, IGF2BP3-A, STAU and VgRBP60. Binds to the 3'-UTR of Vg1 mRNA. Interacts with profilin, a protein involved in actin assembly. Interacts with VgRBP71. Expressed in oocytes.

It is found in the cytoplasm. Its function is as follows. RNA-binding protein, which is required during gametogenesis. May be involved in the actin-dependent anchoring of Vg1 mRNA in the vegetal cortex of the oocyte. In Xenopus laevis (African clawed frog), this protein is DAZ-associated protein 1 (dazap1).